The sequence spans 212 residues: Large ribosomal subunit protein uL3 (212 aa).

N5-methylglutamine is present on Gln-153.

This sequence belongs to the universal ribosomal protein uL3 family. In terms of assembly, part of the 50S ribosomal subunit. Forms a cluster with proteins L14 and L19. Post-translationally, methylated by PrmB.

In terms of biological role, one of the primary rRNA binding proteins, it binds directly near the 3'-end of the 23S rRNA, where it nucleates assembly of the 50S subunit. In Shewanella denitrificans (strain OS217 / ATCC BAA-1090 / DSM 15013), this protein is Large ribosomal subunit protein uL3.